The following is a 181-amino-acid chain: MSYTDIPAGNAIPDDFFTVIEIPANHSPIKYEVDKPSGQIFVDRFLSTPMFYPANYGFIPNTLSDDGDPLDVLVICPYPVSPGVVIRSRPVGVMYMTDEAGADAKVIAVPHEKLSSMYSNVKECSDLPALLLAQIQHFFENYKALEPGKWVKMGRWGSADEAREDIRKSVAAYNLKKEASK.

The substrate site is built by Lys30, Arg44, and Tyr56. Mg(2+) is bound by residues Asp66, Asp71, and Asp103. Tyr142 is a binding site for substrate.

It belongs to the PPase family. As to quaternary structure, homohexamer. It depends on Mg(2+) as a cofactor.

The protein localises to the cytoplasm. The catalysed reaction is diphosphate + H2O = 2 phosphate + H(+). Its function is as follows. Catalyzes the hydrolysis of inorganic pyrophosphate (PPi) forming two phosphate ions. This Pseudomonas syringae pv. tomato (strain ATCC BAA-871 / DC3000) protein is Inorganic pyrophosphatase 2.